The primary structure comprises 465 residues: ATP synthase subunit beta (465 aa).

Position 155-162 (155-162 (GGAGVGKT)) interacts with ATP.

It belongs to the ATPase alpha/beta chains family. In terms of assembly, F-type ATPases have 2 components, CF(1) - the catalytic core - and CF(0) - the membrane proton channel. CF(1) has five subunits: alpha(3), beta(3), gamma(1), delta(1), epsilon(1). CF(0) has three main subunits: a(1), b(2) and c(9-12). The alpha and beta chains form an alternating ring which encloses part of the gamma chain. CF(1) is attached to CF(0) by a central stalk formed by the gamma and epsilon chains, while a peripheral stalk is formed by the delta and b chains.

The protein resides in the cell membrane. The catalysed reaction is ATP + H2O + 4 H(+)(in) = ADP + phosphate + 5 H(+)(out). Functionally, produces ATP from ADP in the presence of a proton gradient across the membrane. The catalytic sites are hosted primarily by the beta subunits. This chain is ATP synthase subunit beta, found in Buchnera aphidicola subsp. Acyrthosiphon pisum (strain 5A).